A 121-amino-acid chain; its full sequence is Small ribosomal subunit protein uS13 (121 aa).

The tract at residues 94–121 (GLPLRGQRTRTNARTRKGPRRAAQSLKK) is disordered.

The protein belongs to the universal ribosomal protein uS13 family. Part of the 30S ribosomal subunit. Forms a loose heterodimer with protein S19. Forms two bridges to the 50S subunit in the 70S ribosome.

In terms of biological role, located at the top of the head of the 30S subunit, it contacts several helices of the 16S rRNA. In the 70S ribosome it contacts the 23S rRNA (bridge B1a) and protein L5 of the 50S subunit (bridge B1b), connecting the 2 subunits; these bridges are implicated in subunit movement. Contacts the tRNAs in the A and P-sites. In Paraburkholderia phymatum (strain DSM 17167 / CIP 108236 / LMG 21445 / STM815) (Burkholderia phymatum), this protein is Small ribosomal subunit protein uS13.